Reading from the N-terminus, the 178-residue chain is ATP-dependent protease subunit HslV (178 aa).

Threonine 7 is a catalytic residue. Na(+) is bound by residues glycine 162, cysteine 165, and threonine 168.

It belongs to the peptidase T1B family. HslV subfamily. As to quaternary structure, a double ring-shaped homohexamer of HslV is capped on each side by a ring-shaped HslU homohexamer. The assembly of the HslU/HslV complex is dependent on binding of ATP.

It localises to the cytoplasm. The catalysed reaction is ATP-dependent cleavage of peptide bonds with broad specificity.. With respect to regulation, allosterically activated by HslU binding. Its function is as follows. Protease subunit of a proteasome-like degradation complex believed to be a general protein degrading machinery. This chain is ATP-dependent protease subunit HslV, found in Azoarcus sp. (strain BH72).